The primary structure comprises 77 residues: uncharacterized protein (77 aa).

Positions 56–77 (SVIPKQQPPSSAAAISESEFED) are disordered. Over residues 65–77 (SSAAAISESEFED) the composition is skewed to low complexity.

This is an uncharacterized protein from Frog virus 3 (isolate Goorha) (FV-3).